The following is a 100-amino-acid chain: Urease subunit gamma (100 aa).

Belongs to the urease gamma subunit family. Heterotrimer of UreA (gamma), UreB (beta) and UreC (alpha) subunits. Three heterotrimers associate to form the active enzyme.

The protein resides in the cytoplasm. It carries out the reaction urea + 2 H2O + H(+) = hydrogencarbonate + 2 NH4(+). It participates in nitrogen metabolism; urea degradation; CO(2) and NH(3) from urea (urease route): step 1/1. This is Urease subunit gamma from Ralstonia pickettii (strain 12J).